The chain runs to 347 residues: MGSESESVCVTGASGFIGSWLVMRLLEHGYTVRATVRDPTNQKKVKHLLDLPKAETHLTLWKADLADEGSFDEAIQGCSGVFHVATPMDFESRDPENEVIKPTINGLLDILKACQKAKTVRKLVFTSSAGTVNVEEHQKPVYDESNWSDVEFCRSVKMTGWMYFVSKTLAEQAAWKYAKENNIDFITIIPTLVIGPFLMPSMPPSLITGLSPILRNESHYGIIKQGQYVHLDDLCLSHIYLYKHPKAEGRYICSSHDATIHELVKMLREKYPEYNIPTKFKGIDDNLEPVHFSSKKLREIGFEFKYSLEDMFVGAVDACRAKGLIPIPAEKTEAAEESNLVDVKVGS.

NADP(+) contacts are provided by Lys44 and Tyr163.

Belongs to the NAD(P)-dependent epimerase/dehydratase family. Dihydroflavonol-4-reductase subfamily.

The enzyme catalyses a (2R,3S,4S)-leucoanthocyanidin + NADP(+) = a (2R,3R)-dihydroflavonol + NADPH + H(+). It carries out the reaction (2S)-flavan-4-ol + NADP(+) = (2S)-flavanone + NADPH + H(+). In terms of biological role, bifunctional enzyme involved in the flavonoid metabolism. May use dihydroquercetin, eriodictyol, garbanzol (5-deoxydihydrokaempferol), dihydrofisetin (5-deoxydihydroquercetin), dihydrokaempferol to a low extent (5%), but not naringenin, 5-deoxynaringenin or butin (5-deoxyeriodictyol) as substrate. This Pyrus communis (Pear) protein is Bifunctional dihydroflavonol 4-reductase/flavanone 4-reductase (DFR).